Reading from the N-terminus, the 66-residue chain is Cell division protein FtsB (66 aa).

At 1–3 the chain is on the cytoplasmic side; it reads MKM. Residues 4-21 form a helical membrane-spanning segment; sequence LKIFLLFLLFWLQCSLWI. At 22–66 the chain is on the extracellular side; sequence GKNGILDYIKIYKKIIVQKKKNEDFQIRNNQLILEIERLNNAIKN. Residues 38–66 adopt a coiled-coil conformation; it reads VQKKKNEDFQIRNNQLILEIERLNNAIKN.

It belongs to the FtsB family.

It is found in the cell membrane. Essential cell division protein. May link together the upstream cell division proteins, which are predominantly cytoplasmic, with the downstream cell division proteins, which are predominantly extracellular. This Buchnera aphidicola subsp. Schizaphis graminum (strain Sg) protein is Cell division protein FtsB.